The sequence spans 423 residues: UPF0229 protein Pfl01_5140 (423 aa).

The tract at residues 83–108 (TAGEHIARPPGGGGGRGPGKAGNSGE) is disordered. The segment covering 92–107 (PGGGGGRGPGKAGNSG) has biased composition (gly residues).

It belongs to the UPF0229 family.

The chain is UPF0229 protein Pfl01_5140 from Pseudomonas fluorescens (strain Pf0-1).